The sequence spans 83 residues: UPF0270 protein CGSHiEE_07180 (83 aa).

Belongs to the UPF0270 family.

This chain is UPF0270 protein CGSHiEE_07180, found in Haemophilus influenzae (strain PittEE).